Here is a 402-residue protein sequence, read N- to C-terminus: uncharacterized protein (402 aa).

The Cytoplasmic segment spans residues 1-11 (MTPSNYQRTRW). Residues 12 to 34 (LTLIGTIITQFALGSVYTWSLFN) traverse the membrane as a helical segment. Residues 35–43 (GALSAKLDA) are Periplasmic-facing. A helical membrane pass occupies residues 44–66 (PVSQVAFSFGLLSLGLAISSSVA). Topologically, residues 67–72 (GKLQER) are cytoplasmic. The helical transmembrane segment at 73-95 (FGVKRVTMASGILLGLGFFLTAH) threads the bilayer. Residues 96-99 (SDNL) are Periplasmic-facing. The chain crosses the membrane as a helical span at residues 100–122 (MMLWLSAGVLVGLADGAGYLLTL). Over 123–134 (SNCVKWFPERKG) the chain is Cytoplasmic. A helical membrane pass occupies residues 135–154 (LISAFAIGSYGLGSLGFKFI). Topologically, residues 155–168 (DTQLLETVGLEKTF) are periplasmic. A helical transmembrane segment spans residues 169-186 (VIWGAIALLMIVFGATLM). Over 187–216 (KDAPKQEVKTSNGVVEKDYTLAESMRKPQY) the chain is Cytoplasmic. A helical membrane pass occupies residues 217–236 (WMLAVMFLTACMSGLYVIGV). Residues 237–250 (AKDIAQSLAHLDVV) lie on the Periplasmic side of the membrane. A helical transmembrane segment spans residues 251-273 (SAANAVTVISIANLSGRLVLGIL). Topologically, residues 274–279 (SDKIAR) are cytoplasmic. The chain crosses the membrane as a helical span at residues 280 to 302 (IRVITIGQVISLVGMAALLFAPL). At 303-306 (NAVT) the chain is on the periplasmic side. Residues 307 to 329 (FFAAIACVAFNFGGTITVFPSLV) traverse the membrane as a helical segment. At 330-341 (SEFFGLNNLAKN) the chain is on the cytoplasmic side. A helical membrane pass occupies residues 342–364 (YGVIYLGFGIGSICGSIIASLFG). Residues 365-367 (GFY) lie on the Periplasmic side of the membrane. The chain crosses the membrane as a helical span at residues 368 to 387 (VTFYVIFALLILSLALSTTI). At 388–402 (RQPEQKMLREAHGSL) the chain is on the cytoplasmic side.

This sequence belongs to the major facilitator superfamily. In terms of assembly, interacts with BtsS and YpdA.

Its subcellular location is the cell inner membrane. Part of a nutrient-sensing regulatory network composed of the two-component regulatory systems BtsS/BtsR and YpdA/YpdB, and their respective target proteins, BtsT and YhjX. This is an uncharacterized protein from Escherichia coli (strain K12).